Reading from the N-terminus, the 151-residue chain is Cytochrome c-type biogenesis protein CcmE (151 aa).

The Cytoplasmic portion of the chain corresponds to 1–8 (MNPLRRKR). The helical; Signal-anchor for type II membrane protein transmembrane segment at 9–29 (LLIILAILVGVGVAVGLALSA) threads the bilayer. The Periplasmic portion of the chain corresponds to 30–151 (LQQNINLFYT…QSAPTPAKEG (122 aa)). Heme contacts are provided by histidine 124 and tyrosine 128.

The protein belongs to the CcmE/CycJ family.

The protein resides in the cell inner membrane. Heme chaperone required for the biogenesis of c-type cytochromes. Transiently binds heme delivered by CcmC and transfers the heme to apo-cytochromes in a process facilitated by CcmF and CcmH. This Pseudomonas fluorescens biotype C protein is Cytochrome c-type biogenesis protein CcmE.